Reading from the N-terminus, the 249-residue chain is Pleckstrin homology domain-containing family F member 2 (249 aa).

At S16 the chain carries Phosphoserine. Residues V35–T131 enclose the PH domain. Residue K44 is modified to N6-acetyllysine. The FYVE-type zinc-finger motif lies at D152–S212. Residues C158, C161, C175, C178, C183, C186, C204, and C207 each contribute to the Zn(2+) site. Polar residues predominate over residues P221–S233. The disordered stretch occupies residues P221–D249. Residues M238 to D249 show a composition bias toward acidic residues. Residues S239 and S248 each carry the phosphoserine modification.

In terms of assembly, may interact with EEA1. Expressed in placenta, ovary and small intestine, as well as in heart and pancreas. Also expressed in peripheral blood mononuclear cells and dendritic cells.

It is found in the early endosome membrane. The protein localises to the endoplasmic reticulum. Functionally, may play a role in early endosome fusion upstream of RAB5, hence regulating receptor trafficking and fluid-phase transport. Enhances cellular sensitivity to TNF-induced apoptosis. This Homo sapiens (Human) protein is Pleckstrin homology domain-containing family F member 2 (PLEKHF2).